A 162-amino-acid chain; its full sequence is uncharacterized protein (162 aa).

This is an uncharacterized protein from Sputnik virophage.